Reading from the N-terminus, the 211-residue chain is ATP-dependent Clp protease proteolytic subunit (211 aa).

The Nucleophile role is filled by Ser106. His131 is a catalytic residue.

This sequence belongs to the peptidase S14 family. Fourteen ClpP subunits assemble into 2 heptameric rings which stack back to back to give a disk-like structure with a central cavity, resembling the structure of eukaryotic proteasomes.

The protein resides in the cytoplasm. The enzyme catalyses Hydrolysis of proteins to small peptides in the presence of ATP and magnesium. alpha-casein is the usual test substrate. In the absence of ATP, only oligopeptides shorter than five residues are hydrolyzed (such as succinyl-Leu-Tyr-|-NHMec, and Leu-Tyr-Leu-|-Tyr-Trp, in which cleavage of the -Tyr-|-Leu- and -Tyr-|-Trp bonds also occurs).. In terms of biological role, cleaves peptides in various proteins in a process that requires ATP hydrolysis. Has a chymotrypsin-like activity. Plays a major role in the degradation of misfolded proteins. The protein is ATP-dependent Clp protease proteolytic subunit of Maricaulis maris (strain MCS10) (Caulobacter maris).